Here is a 306-residue protein sequence, read N- to C-terminus: Serine/threonine-protein kinase KIN28 (306 aa).

The 284-residue stretch at 7–290 folds into the Protein kinase domain; it reads YTKEKKVGEG…AVQCLESDYF (284 aa). Residues 13-21 and K36 contribute to the ATP site; that span reads VGEGTYAVV. D129 functions as the Proton acceptor in the catalytic mechanism. T162 is subject to Phosphothreonine; by CAK.

The protein belongs to the protein kinase superfamily. CMGC Ser/Thr protein kinase family. CDC2/CDKX subfamily. CCL1 and KIN28 form the TFIIK complex, a component of the TFIIH holo complex. Component of a complex consisting of KIN28, CCL1 and TFB3. Interacts with TFB3. Also interacts with HNT1 and HOG1. In terms of processing, phosphorylation of Thr-162 regulates the affinity of interaction between CCL1, KIN28 and TFB3. Thr-162 phosphorylation does not vary through the cell cycle and is necessary for full kinase activity.

The protein resides in the nucleus. It carries out the reaction [DNA-directed RNA polymerase] + ATP = phospho-[DNA-directed RNA polymerase] + ADP + H(+). Catalytic component of the TFIIK complex (KIN28-CCL1 dimer) which is the protein kinase component of transcription factor IIH (TFIIH) and phosphorylates the C-terminal domain of RNA polymerase II during transition from transcription to elongation after preinitiation complex (PIC) formation, thereby positively regulating transcription. TFIIH (or factor B) is essential for both basal and activated transcription, and is involved in nucleotide excision repair (NER) of damaged DNA. TFIIH has DNA-dependent ATPase activity and is essential for polymerase II transcription in vitro. Essential for cell proliferation. This Saccharomyces cerevisiae (strain ATCC 204508 / S288c) (Baker's yeast) protein is Serine/threonine-protein kinase KIN28 (KIN28).